Consider the following 163-residue polypeptide: tRNA-acetylating toxin 2 (163 aa).

Tyrosine 137 is a catalytic residue.

Belongs to the acetyltransferase family. GNAT subfamily. Homodimer. Forms a complex with cognate antitoxin TacA2.

The catalysed reaction is glycyl-tRNA(Gly) + acetyl-CoA = N-acetylglycyl-tRNA(Gly) + CoA + H(+). The enzyme catalyses L-isoleucyl-tRNA(Ile) + acetyl-CoA = N-acetyl-L-isoleucyl-tRNA(Ile) + CoA + H(+). It catalyses the reaction L-leucyl-tRNA(Leu) + acetyl-CoA = N-acetyl-L-leucyl-tRNA(Leu) + CoA + H(+). In terms of biological role, toxic component of a type II toxin-antitoxin (TA) system. Acetylates tRNA and inhibits translation. Acetylates mainly Gly and Ile/Leu in vitro. Overexpression during the lag phase of a tacA2-tacT2 deletion strain leads to a 100-fold increase in persister cells in the presence of cefotaxime and a non-growth state in the absence of antibiotic. This protein, which has a single amino acid compared to S.typhimurium strain 14028s (Lys-29 is Glu in 14028s), produces 100-fold more persister cells, has much higher acetylation activity and binds tRNA much better. Persister cell formation and the growth defect are neutralized by cognate antitoxin TacA2. Functionally, the TacA2-TacT2 complex both represses and derepresses expression of its own operon. The polypeptide is tRNA-acetylating toxin 2 (Salmonella enteritidis).